A 91-amino-acid chain; its full sequence is Probable Fe(2+)-trafficking protein (91 aa).

Belongs to the Fe(2+)-trafficking protein family.

Its function is as follows. Could be a mediator in iron transactions between iron acquisition and iron-requiring processes, such as synthesis and/or repair of Fe-S clusters in biosynthetic enzymes. The protein is Probable Fe(2+)-trafficking protein of Burkholderia multivorans (strain ATCC 17616 / 249).